Here is a 167-residue protein sequence, read N- to C-terminus: Ubiquitin-conjugating enzyme E2 2 (167 aa).

The region spanning 4-150 is the UBC core domain; sequence PARRRLMRDF…VKETVEKSWE (147 aa). Catalysis depends on C88, which acts as the Glycyl thioester intermediate. The tract at residues 148-167 is disordered; it reads SWEDNMDDMDDSDEDDEDDE. The segment covering 151 to 167 has biased composition (acidic residues); that stretch reads DNMDDMDDSDEDDEDDE.

The protein belongs to the ubiquitin-conjugating enzyme family.

It is found in the cytoplasm. The protein resides in the nucleus. The catalysed reaction is S-ubiquitinyl-[E1 ubiquitin-activating enzyme]-L-cysteine + [E2 ubiquitin-conjugating enzyme]-L-cysteine = [E1 ubiquitin-activating enzyme]-L-cysteine + S-ubiquitinyl-[E2 ubiquitin-conjugating enzyme]-L-cysteine.. It participates in protein modification; protein ubiquitination. Functionally, catalyzes the covalent attachment of ubiquitin to other proteins. Plays a role in transcription regulation by catalyzing the monoubiquitination of histone H2B to form H2BK123ub1. H2BK123ub1 gives a specific tag for epigenetic transcriptional activation and is also a prerequisite for H3K4me and H3K79me formation. Also involved in postreplication repair of UV-damaged DNA, in N-end rule-dependent protein degradation and in sporulation. The polypeptide is Ubiquitin-conjugating enzyme E2 2 (UBC2) (Candida glabrata (strain ATCC 2001 / BCRC 20586 / JCM 3761 / NBRC 0622 / NRRL Y-65 / CBS 138) (Yeast)).